Consider the following 594-residue polypeptide: Aspartate--tRNA(Asp/Asn) ligase (594 aa).

Glutamate 175 is an L-aspartate binding site. The aspartate stretch occupies residues 199–202; the sequence is QLFK. Arginine 221 contributes to the L-aspartate binding site. ATP-binding positions include 221–223 and glutamine 230; that span reads RDE. Histidine 446 is an L-aspartate binding site. Glutamate 492 is a binding site for ATP. Arginine 499 serves as a coordination point for L-aspartate. Residue 544–547 participates in ATP binding; the sequence is GFDR.

Belongs to the class-II aminoacyl-tRNA synthetase family. Type 1 subfamily. As to quaternary structure, homodimer.

The protein localises to the cytoplasm. It carries out the reaction tRNA(Asx) + L-aspartate + ATP = L-aspartyl-tRNA(Asx) + AMP + diphosphate. Aspartyl-tRNA synthetase with relaxed tRNA specificity since it is able to aspartylate not only its cognate tRNA(Asp) but also tRNA(Asn). Reaction proceeds in two steps: L-aspartate is first activated by ATP to form Asp-AMP and then transferred to the acceptor end of tRNA(Asp/Asn). The chain is Aspartate--tRNA(Asp/Asn) ligase from Hydrogenobaculum sp. (strain Y04AAS1).